A 186-amino-acid polypeptide reads, in one-letter code: ATP-dependent protease subunit HslV (186 aa).

The active site involves Thr14. Na(+) is bound by residues Ala168, Cys171, and Thr174.

It belongs to the peptidase T1B family. HslV subfamily. A double ring-shaped homohexamer of HslV is capped on each side by a ring-shaped HslU homohexamer. The assembly of the HslU/HslV complex is dependent on binding of ATP.

It localises to the cytoplasm. The enzyme catalyses ATP-dependent cleavage of peptide bonds with broad specificity.. With respect to regulation, allosterically activated by HslU binding. Functionally, protease subunit of a proteasome-like degradation complex believed to be a general protein degrading machinery. This is ATP-dependent protease subunit HslV from Methylorubrum extorquens (strain CM4 / NCIMB 13688) (Methylobacterium extorquens).